Consider the following 770-residue polypeptide: DNA topoisomerase 1 (770 aa).

Positions 4-140 (FRIIIAEKAD…EIRRAKFSAL (137 aa)) constitute a Toprim domain. Positions 10 and 109 each coordinate Mg(2+). One can recognise a Topo IA-type catalytic domain in the interval 156–563 (NYSLADAADA…ESKKMLHEVL (408 aa)). Residues 194-199 (SAGRVQ) form an interaction with DNA region. Tyr312 functions as the O-(5'-phospho-DNA)-tyrosine intermediate in the catalytic mechanism. C4-type zinc fingers lie at residues 611 to 638 (CEDP…CPVC), 673 to 700 (CPAD…YPKC), and 719 to 744 (CPYC…NMQC).

It belongs to the type IA topoisomerase family. Monomer. Mg(2+) is required as a cofactor.

The catalysed reaction is ATP-independent breakage of single-stranded DNA, followed by passage and rejoining.. Functionally, releases the supercoiling and torsional tension of DNA, which is introduced during the DNA replication and transcription, by transiently cleaving and rejoining one strand of the DNA duplex. Introduces a single-strand break via transesterification at a target site in duplex DNA. The scissile phosphodiester is attacked by the catalytic tyrosine of the enzyme, resulting in the formation of a DNA-(5'-phosphotyrosyl)-enzyme intermediate and the expulsion of a 3'-OH DNA strand. The free DNA strand then undergoes passage around the unbroken strand, thus removing DNA supercoils. Finally, in the religation step, the DNA 3'-OH attacks the covalent intermediate to expel the active-site tyrosine and restore the DNA phosphodiester backbone. The chain is DNA topoisomerase 1 from Thermoplasma acidophilum (strain ATCC 25905 / DSM 1728 / JCM 9062 / NBRC 15155 / AMRC-C165).